The following is a 350-amino-acid chain: 4-hydroxy-2-oxovalerate aldolase 3 (350 aa).

The region spanning 13 to 265 (VVFHDMCLRD…DTGVDLFRLM (253 aa)) is the Pyruvate carboxyltransferase domain. Substrate is bound at residue 21-22 (RD). Residue Asp-22 coordinates Mn(2+). His-25 (proton acceptor) is an active-site residue. Ser-175 and His-204 together coordinate substrate. 2 residues coordinate Mn(2+): His-204 and His-206. Residue Tyr-295 participates in substrate binding.

Belongs to the 4-hydroxy-2-oxovalerate aldolase family.

It carries out the reaction (S)-4-hydroxy-2-oxopentanoate = acetaldehyde + pyruvate. The protein is 4-hydroxy-2-oxovalerate aldolase 3 (lapG) of Azotobacter vinelandii (strain DJ / ATCC BAA-1303).